The chain runs to 241 residues: Probable transcriptional regulatory protein CV_3123 (241 aa).

Belongs to the TACO1 family.

The protein resides in the cytoplasm. This is Probable transcriptional regulatory protein CV_3123 from Chromobacterium violaceum (strain ATCC 12472 / DSM 30191 / JCM 1249 / CCUG 213 / NBRC 12614 / NCIMB 9131 / NCTC 9757 / MK).